The sequence spans 388 residues: Chaperone protein DnaJ (388 aa).

In terms of domain architecture, J spans 5 to 69; that stretch reads DYYDVLGVDK…QKKAQYDQFG (65 aa). The segment at 145–227 adopts a CR-type zinc-finger fold; it reads GKKTDITYTR…CHGKGTIDKK (83 aa). Cys158, Cys161, Cys175, Cys178, Cys201, Cys204, Cys215, and Cys218 together coordinate Zn(2+). CXXCXGXG motif repeat units follow at residues 158 to 165, 175 to 182, 201 to 208, and 215 to 222; these read CPTCDGSG, CDKCHGTG, CDKCGGRG, and CQTCHGKG.

Belongs to the DnaJ family. Homodimer. The cofactor is Zn(2+).

It is found in the cytoplasm. In terms of biological role, participates actively in the response to hyperosmotic and heat shock by preventing the aggregation of stress-denatured proteins and by disaggregating proteins, also in an autonomous, DnaK-independent fashion. Unfolded proteins bind initially to DnaJ; upon interaction with the DnaJ-bound protein, DnaK hydrolyzes its bound ATP, resulting in the formation of a stable complex. GrpE releases ADP from DnaK; ATP binding to DnaK triggers the release of the substrate protein, thus completing the reaction cycle. Several rounds of ATP-dependent interactions between DnaJ, DnaK and GrpE are required for fully efficient folding. Also involved, together with DnaK and GrpE, in the DNA replication of plasmids through activation of initiation proteins. The sequence is that of Chaperone protein DnaJ from Lactobacillus gasseri (strain ATCC 33323 / DSM 20243 / BCRC 14619 / CIP 102991 / JCM 1131 / KCTC 3163 / NCIMB 11718 / NCTC 13722 / AM63).